Consider the following 1513-residue polypeptide: MGGKHQGSGAGASSGGGSLNSSLCNSVMTNATTASSSLTQQQQQLQAKYIKSKRHQSRYTSLQHSGHDSGSYLHLNSLWSIWYGVMLTLFQGYLAMHGAYRFLGCSLIPWKIEPVAELNLQIVLSGVVFILLPVFFTSAVFKVGNLANDGIKLATGARERRCTLSPHDGLEEESRGGTLRALWTHGGPTAAFVHIVIALCLLLPRLLLEARIIENGLLPKEQIWATELDFVVINRRNLMAMSVVGATPFPRHHQPSNQQQSHHQHGRLNLTANSLEQDEEDYFNDTMFTAIRGVPAGGNNNLFDLRPDRMANGRKAAKTTATTRTTTTANKLDAGKGQYFEVPDLINQDIDEEERQELEEAIRGEEDDGDEGVGVGEEGTVIMPDFDELAPRTAVGTSTTTAKASSDADKLNVENWQQLGTLGKADASSSSSSTTSTTTTTTTSTTTTAATTTSTRGTSTTTTTTTIKPMEITTSRQSAHHHHGKSRKHHKHHNKQRQQQPPRRHHVASHEQAILESFPEEETTTRDSSIHRVRPEVLPELPIPSTPVSASNSKIIAIKAKNQKRRISKRAAGVEIEPEYLLGDANINSSEFVAKSNEEEPEESEDFELEDGDFQAVPALTPAPPAEPNGPKSGQDYVRLDGFAGMLQLFFGIDKPIDVAIFSQPPSAEFVNLLCALLVWSVRYPAVFWNTSKAFACVFSLQMVVAALDIILGYVGISNLYKLQIYAEAMPVHQPGLILNAVVTLALYLLSTALVLASSMVMYLYGHGRLATRMRDRSIITLKTHQTWIYFAHCASLCFVLALAVVKAPLLNDLSATYKNNLHCPTFLAALVGVTHLLLWIVIWLCLTIKRRWHFKLPPLDSTYGGLLGKSSAQPLLMSSGQRTGSNSSSSGCNSTSTTVNGGDSKPDMMSTATSTELGMGMGMGIGGGINGGMGGTGMGLAAQEDIYWPKLTPSSPKLKVTFNEVTSTSDDVLLIGDQEQTDGKRHTSRGASVCFASATGEVDDGEYATLRAATAGAVVGITMGSMKRGLSNTSVGVSLLHLSEYDELPPPPPANLHHQQQQQQQQQQRQAHSFAHGHPHDYANLSGLGGISDDNISEEGKLLACVRDDSITYASTSDLEPPQPSAQAPPPPPPLPIKGAPVPQPPAVMPHSAGIYGRAPQAMPEMMQLSPEHHHNPLQHSLQHPQHHPLQQQQQKQQTPQHPLQQQGNPHQHLVSPLAPVTVAVHTNEAHIASSSTPRCLRRADSGVPNEALTPRSDTTSTTESTNTTSPPERAPSESSSGVHSGEERELEVIIRPRANSKPPPRPPQPPIQEEPYGRCTNMRMSSFNADPAATSSAVINSATLPPQRSVPEQKFDYTAHCSTMPLPVGCHSQQLAGSGNGYASTSAMTSSMGGGGMPPLPPSQVSSFMTPNSMHYANASVALGNVSGQQQPHTTLPNGVRYSNPHFLRRLPHVTKAAESPYGHLGYGAGHHAFAKLPHETHPTIPEDRDSANYSMASDQDCGLYVTAQLH.

At 1–77 (MGGKHQGSGA…DSGSYLHLNS (77 aa)) the chain is on the cytoplasmic side. A helical membrane pass occupies residues 78-98 (LWSIWYGVMLTLFQGYLAMHG). Residues 99–120 (AYRFLGCSLIPWKIEPVAELNL) are Extracellular-facing. The helical transmembrane segment at 121–141 (QIVLSGVVFILLPVFFTSAVF) threads the bilayer. The Cytoplasmic portion of the chain corresponds to 142–181 (KVGNLANDGIKLATGARERRCTLSPHDGLEEESRGGTLRA). The chain crosses the membrane as a helical span at residues 182 to 202 (LWTHGGPTAAFVHIVIALCLL). Residues 203-668 (LPRLLLEARI…VAIFSQPPSA (466 aa)) lie on the Extracellular side of the membrane. Disordered regions lie at residues 247-266 (TPFP…HQHG), 354-373 (ERQE…DEGV), and 383-532 (MPDF…SIHR). Over residues 427 to 466 (ASSSSSSTTSTTTTTTTSTTTTAATTTSTRGTSTTTTTTT) the composition is skewed to low complexity. Residues 478–507 (SAHHHHGKSRKHHKHHNKQRQQQPPRRHHV) are compositionally biased toward basic residues. Residues 523 to 532 (TTTRDSSIHR) show a composition bias toward basic and acidic residues. Residues 669 to 689 (EFVNLLCALLVWSVRYPAVFW) traverse the membrane as a helical segment. Topologically, residues 690–696 (NTSKAFA) are cytoplasmic. A helical membrane pass occupies residues 697–717 (CVFSLQMVVAALDIILGYVGI). Over 718–736 (SNLYKLQIYAEAMPVHQPG) the chain is Extracellular. Residues 737–757 (LILNAVVTLALYLLSTALVLA) form a helical membrane-spanning segment. The Cytoplasmic portion of the chain corresponds to 758 to 787 (SSMVMYLYGHGRLATRMRDRSIITLKTHQT). The helical transmembrane segment at 788 to 808 (WIYFAHCASLCFVLALAVVKA) threads the bilayer. Over 809 to 826 (PLLNDLSATYKNNLHCPT) the chain is Extracellular. A helical transmembrane segment spans residues 827–847 (FLAALVGVTHLLLWIVIWLCL). The Cytoplasmic segment spans residues 848 to 1513 (TIKRRWHFKL…CGLYVTAQLH (666 aa)). Low complexity-rich tracts occupy residues 879-903 (SSGQ…VNGG) and 1060-1071 (QQQQQQQQQQRQ). Disordered regions lie at residues 879-913 (SSGQ…MSTA), 1045-1090 (EYDE…SGLG), 1115-1155 (ASTS…HSAG), 1173-1214 (EHHH…PHQH), and 1231-1335 (AHIA…DPAA). The span at 1122 to 1149 (PPQPSAQAPPPPPPLPIKGAPVPQPPAV) shows a compositional bias: pro residues. Composition is skewed to low complexity over residues 1179–1208 (LQHS…LQQQ) and 1255–1285 (TPRS…SGVH). Basic and acidic residues predominate over residues 1286-1296 (SGEERELEVII). The segment covering 1303 to 1314 (KPPPRPPQPPIQ) has biased composition (pro residues). The segment covering 1324 to 1335 (MRMSSFNADPAA) has biased composition (polar residues).

In terms of tissue distribution, expression varies in tissues throughout development. At stage 5, expressed in the embryo dorsal region followed by expression in a striped pattern at stage 6. During gastrulation, expressed in ventral region and ventral nerve cord. Also detected in many neurons in the externa sensilla and chordotonal organ. At stage 16, expressed on the surface of the midgut. Additionally, expressed in a subset of cardioblasts (Tin+ subpopulation) during dorsal vessel formation. In third-instar larval tissues, expressed in the eye and antennal disks. In the antennal disks, expressed in the second antennal segments. In the eye disks, strongest expression found in the ocelli, and in the differentiating ommatidial cells. Also expressed in all cells within and in the vicinity of the morphogenetic furrow.

It is found in the membrane. Its function is as follows. Involved in eye morphogenesis. May be essential for the normal differentiation of ommatidial cells. This Drosophila melanogaster (Fruit fly) protein is Protein tincar (tinc).